The sequence spans 255 residues: Probable iron chelatin transport ATP-binding protein jhp_0821 (255 aa).

Residues Leu3–Pro240 enclose the ABC transporter domain. Ala35–Thr42 provides a ligand contact to ATP.

This sequence belongs to the ABC transporter superfamily.

It is found in the cell inner membrane. In terms of biological role, part of a binding-protein-dependent transport system for an iron chelatin. Probably responsible for energy coupling to the transport system (Potential). The protein is Probable iron chelatin transport ATP-binding protein jhp_0821 of Helicobacter pylori (strain J99 / ATCC 700824) (Campylobacter pylori J99).